Consider the following 239-residue polypeptide: uncharacterized protein (239 aa).

The 54-residue stretch at 13-66 folds into the HTH cro/C1-type domain; the sequence is IEYLVDKLNGPSEFARKTGVTLSTITRWRKGEADPSRSNLVKIAEVTGVSIEWL. A DNA-binding region (H-T-H motif) is located at residues 24–43; that stretch reads SEFARKTGVTLSTITRWRKG.

This is an uncharacterized protein from Haemophilus influenzae (strain ATCC 51907 / DSM 11121 / KW20 / Rd).